Reading from the N-terminus, the 190-residue chain is Peptidyl-tRNA hydrolase (190 aa).

Residue Tyr-18 participates in tRNA binding. Catalysis depends on His-23, which acts as the Proton acceptor. TRNA is bound by residues Phe-69, Asn-71, and Asn-117.

Belongs to the PTH family. Monomer.

The protein localises to the cytoplasm. It catalyses the reaction an N-acyl-L-alpha-aminoacyl-tRNA + H2O = an N-acyl-L-amino acid + a tRNA + H(+). Hydrolyzes ribosome-free peptidyl-tRNAs (with 1 or more amino acids incorporated), which drop off the ribosome during protein synthesis, or as a result of ribosome stalling. Its function is as follows. Catalyzes the release of premature peptidyl moieties from peptidyl-tRNA molecules trapped in stalled 50S ribosomal subunits, and thus maintains levels of free tRNAs and 50S ribosomes. In Rhodococcus jostii (strain RHA1), this protein is Peptidyl-tRNA hydrolase.